A 284-amino-acid chain; its full sequence is Cytosolic Fe-S cluster assembly factor NUBP2 homolog (284 aa).

Position 27–34 (27–34) interacts with ATP; sequence GKGGVGKS. C200 and C203 together coordinate [4Fe-4S] cluster.

Belongs to the Mrp/NBP35 ATP-binding proteins family. NUBP2/CFD1 subfamily. Heterotetramer of 2 NUBP1 and 2 NUBP2 chains. [4Fe-4S] cluster serves as cofactor.

The protein localises to the cytoplasm. Functionally, component of the cytosolic iron-sulfur (Fe/S) protein assembly (CIA) machinery. Required for maturation of extramitochondrial Fe-S proteins. The NUBP1-NUBP2 heterotetramer forms a Fe-S scaffold complex, mediating the de novo assembly of an Fe-S cluster and its transfer to target apoproteins. This is Cytosolic Fe-S cluster assembly factor NUBP2 homolog from Monosiga brevicollis (Choanoflagellate).